The chain runs to 154 residues: Iron-sulfur cluster assembly enzyme IscU (154 aa).

The protein belongs to the NifU family. Component of the mitochondrial core iron-sulfur cluster (ISC) assembly complex at least composed of the cystein desulfurase Nfs1, the scaffold protein IscU, the accessory protein bcn92/Isd11/Lyrm4, and probably fh/frataxin. Interacts with Nfs1. Fe(2+) is required as a cofactor. It depends on [2Fe-2S] cluster as a cofactor.

Its pathway is cofactor biosynthesis; iron-sulfur cluster biosynthesis. In terms of biological role, scaffold protein for the de novo synthesis of iron-sulfur (Fe-S) clusters within mitochondria, which is required for maturation of both mitochondrial and cytoplasmic [2Fe-2S] and [4Fe-4S] proteins. Component of the mitochondrial core iron-sulfur cluster (ISC) assembly complex; regulates its activity. This chain is Iron-sulfur cluster assembly enzyme IscU, found in Drosophila melanogaster (Fruit fly).